The sequence spans 273 residues: MAIIKCKPTSPGRRHAIKVVNPSLYKGKPISSLIRKNSKSGGRNNCGRITTRHIGGRHKRFYRIIDFKRNKDNIPAIVERLEYDPNRSSNIALILYSDGDRRYILASKGLMVGSKIVSGFNAEIKIGNALPMKNIPIGTVIHNVEIKPGKGGQIARSAGTYVQLISRENSYVTIRLRSGETRKLESKCRATIGEVGNSESMLRVLGKAGASRWRGIRPTVRGTAMNPVDHPHGGGEGRNFGKHPVSPWGLQTKGKKTRKNKRTEKFIIRHRHK.

The segment at 221–263 (RGTAMNPVDHPHGGGEGRNFGKHPVSPWGLQTKGKKTRKNKRT) is disordered. Residues 253–263 (KGKKTRKNKRT) show a composition bias toward basic residues.

It belongs to the universal ribosomal protein uL2 family. Part of the 50S ribosomal subunit. Forms a bridge to the 30S subunit in the 70S ribosome.

Functionally, one of the primary rRNA binding proteins. Required for association of the 30S and 50S subunits to form the 70S ribosome, for tRNA binding and peptide bond formation. It has been suggested to have peptidyltransferase activity; this is somewhat controversial. Makes several contacts with the 16S rRNA in the 70S ribosome. This is Large ribosomal subunit protein uL2 from Buchnera aphidicola subsp. Baizongia pistaciae (strain Bp).